The following is a 269-amino-acid chain: MTALPRYSVFGNPVAHSKSPQIHQQFALQEGVDIEYERICADIGGFAQAVSTFFGTGGCGANVTVPFKQEAFHLADEHSDRALAAGAVNTLILLKNGKLRGDNTDGIGLANDITQVKNIAIEGKTILLLGAGGAVRGVIPVLKEHRPARIVIANRTRAKAEELAQLFGIEAVPMADVNGGFDIIINGTSGGLNGQIPDIPPDIFQNCALAYDMVYGCAAKPFLDFARQSGAKKTADGLGMLVGQAAASYALWRGFTPDIRPVIEYMKAM.

Shikimate is bound by residues 17–19 and T64; that span reads SKS. K68 (proton acceptor) is an active-site residue. NADP(+) is bound at residue D80. 2 residues coordinate shikimate: N89 and D105. NADP(+) contacts are provided by residues 130–134, 154–159, and M213; these read GAGGA and NRTRAK. Position 215 (Y215) interacts with shikimate. G237 is an NADP(+) binding site.

This sequence belongs to the shikimate dehydrogenase family. Homodimer.

The catalysed reaction is shikimate + NADP(+) = 3-dehydroshikimate + NADPH + H(+). The protein operates within metabolic intermediate biosynthesis; chorismate biosynthesis; chorismate from D-erythrose 4-phosphate and phosphoenolpyruvate: step 4/7. In terms of biological role, involved in the biosynthesis of the chorismate, which leads to the biosynthesis of aromatic amino acids. Catalyzes the reversible NADPH linked reduction of 3-dehydroshikimate (DHSA) to yield shikimate (SA). The protein is Shikimate dehydrogenase (NADP(+)) of Neisseria meningitidis serogroup C (strain 053442).